Reading from the N-terminus, the 744-residue chain is Catalase-peroxidase (744 aa).

Positions 1 to 22 are cleaved as a signal peptide; sequence MSPRARRCTDRCARMSERSMNA. Positions 114 to 234 form a cross-link, tryptophyl-tyrosyl-methioninium (Trp-Tyr) (with M-260); sequence WHSAGTYRLA…LGATEMGLIY (121 aa). Residue His115 is the Proton acceptor of the active site. Positions 234–260 form a cross-link, tryptophyl-tyrosyl-methioninium (Tyr-Met) (with W-114); sequence YVNPEGPDRNGDPISAAKFIRETFARM. His275 contacts heme b.

This sequence belongs to the peroxidase family. Peroxidase/catalase subfamily. In terms of assembly, homodimer or homotetramer. Requires heme b as cofactor. Formation of the three residue Trp-Tyr-Met cross-link is important for the catalase, but not the peroxidase activity of the enzyme.

It carries out the reaction H2O2 + AH2 = A + 2 H2O. It catalyses the reaction 2 H2O2 = O2 + 2 H2O. Functionally, bifunctional enzyme with both catalase and broad-spectrum peroxidase activity. The sequence is that of Catalase-peroxidase from Azorhizobium caulinodans (strain ATCC 43989 / DSM 5975 / JCM 20966 / LMG 6465 / NBRC 14845 / NCIMB 13405 / ORS 571).